The following is a 435-amino-acid chain: MRHIAMKAQWTDFITLLKREVVPALGCTEPMSVALAAANCRKLLGQVPTRVSVWVSGNLFKNGMGVGVPGTGMIGLPVAAAVGITGGNPDAGLEVLKALTPAQVEEAKVLLPAIKVDVKDVPDVLYAEVLAQVEGHSARVVICTDHTRIILMERDGEVLMAQDSAPGVQIQAAPSSKPAMTLREIVEFALQVPLAEIDFIREAATMNQALADEGLQGYGLRIGKILTEQVERKLLSDDLMTLAMRLSSAASDARMDGAMLPAMSNSGSGNQGIAATMPVVAAARFLQASDEQLTRALVMSHLVAIYIKTYQNKLSALCAASTAAMGAGAAITWLLGGQFEQISHCINNMIGDVSGIICDGAGSACSMKVSTSTSAAVKSSLMAINNLHVPQSEGIVSDDVDQTIANLGRLSKQGMLDTDIEIINIMRAKQQGKAE.

The protein belongs to the UPF0597 family.

The protein is UPF0597 protein AHA_4077 of Aeromonas hydrophila subsp. hydrophila (strain ATCC 7966 / DSM 30187 / BCRC 13018 / CCUG 14551 / JCM 1027 / KCTC 2358 / NCIMB 9240 / NCTC 8049).